Consider the following 245-residue polypeptide: Uridylate kinase (245 aa).

An ATP-binding site is contributed by 12–15; that stretch reads KISG. Glycine 55 lines the UMP pocket. Positions 56 and 60 each coordinate ATP. Residues aspartate 76 and 137-144 each bind UMP; that span reads AGAPYLTT. Threonine 164, tyrosine 171, and aspartate 174 together coordinate ATP.

The protein belongs to the UMP kinase family. Homohexamer.

It is found in the cytoplasm. It catalyses the reaction UMP + ATP = UDP + ADP. The protein operates within pyrimidine metabolism; CTP biosynthesis via de novo pathway; UDP from UMP (UMPK route): step 1/1. Inhibited by UTP. Its function is as follows. Catalyzes the reversible phosphorylation of UMP to UDP. This chain is Uridylate kinase, found in Chlamydia muridarum (strain MoPn / Nigg).